The following is a 369-amino-acid chain: Gap junction alpha-5 protein (369 aa).

Topologically, residues 2 to 19 (GDWSFLGEFLEEVHKHST) are cytoplasmic. Residues 20 to 40 (VVGKVWLTVLFIFRMLVLGTA) form a helical membrane-spanning segment. At 41–76 (AGPLWGDEQSDFMCDTQQPGCENVCYDKAFPISHVR) the chain is on the extracellular side. Residues 77-97 (FWVLQIIFVSTPSLVYMGHAM) traverse the membrane as a helical segment. The Cytoplasmic portion of the chain corresponds to 98 to 169 (HTVRMEEKRK…YSILIRTAME (72 aa)). The chain crosses the membrane as a helical span at residues 170–190 (IAFIVGQYILYGIFLETLYIC). Residues 191 to 210 (QRAPCPHPVNCYVSRPTEKN) are Extracellular-facing. Residues 211–231 (VFIIFMLAVAVLSLFLSLAEL) form a helical membrane-spanning segment. Residues 232–369 (YHLGWKKAKE…SKARSDDLSV (138 aa)) lie on the Cytoplasmic side of the membrane. Residues 347–369 (NEKRRFSKASRASSKARSDDLSV) form a disordered region.

It belongs to the connexin family. Alpha-type (group II) subfamily. As to quaternary structure, a connexon is composed of a hexamer of connexins. Mostly in heart, and in the whole embryo, liver, stomach, and pectoral muscle.

The protein localises to the cell membrane. It localises to the cell junction. The protein resides in the gap junction. One gap junction consists of a cluster of closely packed pairs of transmembrane channels, the connexons, through which materials of low MW diffuse from one cell to a neighboring cell. This Gallus gallus (Chicken) protein is Gap junction alpha-5 protein (GJA5).